A 565-amino-acid chain; its full sequence is O-fucosyltransferase 7 (565 aa).

Residues 17–37 (VLIWAICVMTLLCFLTVHIYV) traverse the membrane as a helical; Signal-anchor for type II membrane protein segment. Asparagine 62, asparagine 73, asparagine 104, asparagine 124, and asparagine 190 each carry an N-linked (GlcNAc...) asparagine glycan. 327–329 (HLR) is a binding site for substrate. The N-linked (GlcNAc...) asparagine glycan is linked to asparagine 441. Positions 515-565 (NEIHKTRQGSPRRRKGPASGTKGLERHRSEESFYENPLPDCLCQRDPSKAR) are disordered. Basic residues predominate over residues 520 to 530 (TRQGSPRRRKG).

This sequence belongs to the glycosyltransferase GT106 family.

Its subcellular location is the membrane. It participates in glycan metabolism. The protein is O-fucosyltransferase 7 of Arabidopsis thaliana (Mouse-ear cress).